Consider the following 1020-residue polypeptide: Protein translocase subunit SecA (1020 aa).

ATP-binding positions include glutamine 99, 117–121 (GEGKT), and aspartate 633. A disordered region spans residues 963-992 (NEQPSQEMAADEETQEESKIEENKPEPIVV). A compositionally biased stretch (basic and acidic residues) spans 978–987 (EESKIEENKP). The Zn(2+) site is built by cysteine 1002, cysteine 1004, cysteine 1013, and cysteine 1014.

Belongs to the SecA family. Monomer and homodimer. Part of the essential Sec protein translocation apparatus which comprises SecA, SecYEG and auxiliary proteins SecDF. Other proteins may also be involved. The cofactor is Zn(2+).

The protein resides in the cell inner membrane. It localises to the cytoplasm. The catalysed reaction is ATP + H2O + cellular proteinSide 1 = ADP + phosphate + cellular proteinSide 2.. Part of the Sec protein translocase complex. Interacts with the SecYEG preprotein conducting channel. Has a central role in coupling the hydrolysis of ATP to the transfer of proteins into and across the cell membrane, serving as an ATP-driven molecular motor driving the stepwise translocation of polypeptide chains across the membrane. In Protochlamydia amoebophila (strain UWE25), this protein is Protein translocase subunit SecA.